A 262-amino-acid chain; its full sequence is Hydroxyethylthiazole kinase (262 aa).

Methionine 50 serves as a coordination point for substrate. ATP is bound by residues arginine 125 and threonine 171. Position 198 (glycine 198) interacts with substrate.

Belongs to the Thz kinase family. It depends on Mg(2+) as a cofactor.

The enzyme catalyses 5-(2-hydroxyethyl)-4-methylthiazole + ATP = 4-methyl-5-(2-phosphooxyethyl)-thiazole + ADP + H(+). It participates in cofactor biosynthesis; thiamine diphosphate biosynthesis; 4-methyl-5-(2-phosphoethyl)-thiazole from 5-(2-hydroxyethyl)-4-methylthiazole: step 1/1. Functionally, catalyzes the phosphorylation of the hydroxyl group of 4-methyl-5-beta-hydroxyethylthiazole (THZ). The protein is Hydroxyethylthiazole kinase of Escherichia fergusonii (strain ATCC 35469 / DSM 13698 / CCUG 18766 / IAM 14443 / JCM 21226 / LMG 7866 / NBRC 102419 / NCTC 12128 / CDC 0568-73).